Here is a 68-residue protein sequence, read N- to C-terminus: uncharacterized protein (68 aa).

The segment at 1-20 (MYKQKKKNHPFQCKKKKKKK) is disordered. A helical membrane pass occupies residues 27–44 (IKLLFNYFLFFNFIITTF).

It localises to the membrane. This is an uncharacterized protein from Dictyostelium discoideum (Social amoeba).